We begin with the raw amino-acid sequence, 579 residues long: uncharacterized protein (579 aa).

The next 11 membrane-spanning stretches (helical) occupy residues 13–35 (DLIKQYPLAMSFIFISTAFIPWI), 39–61 (SISRDMIVVLLLPIYFSTVLLLN), 66–83 (ANGLAIAYAILITLAFYF), 93–110 (AYWGLLLIHFVLFVTYPL), 130–152 (LAIVLAGIICICAVLVLNSIEYL), 162–181 (IVPKTLLFIMCFFTPVFFLI), 201–223 (LIVNFIFSPVVILYTLIVYLYLA), 238–257 (YIIMPYIALGLCCQGLRLLL), 264–286 (GFYRVFAYLSIAPLVLLWVGIHT), 296–315 (IRVMLVVLASMMTLFILFSM), and 324–346 (LFSLTACLLLFISTILTSPYYLA).

It localises to the cell membrane. This is an uncharacterized protein from Pasteurella multocida (strain Pm70).